An 859-amino-acid chain; its full sequence is Leucine--tRNA ligase (859 aa).

A 'HIGH' region motif is present at residues 42-52; that stretch reads PYPSGRLHMGH. Residues 618-622 carry the 'KMSKS' region motif; sequence KMSKS. Lys621 contacts ATP.

It belongs to the class-I aminoacyl-tRNA synthetase family.

The protein localises to the cytoplasm. It catalyses the reaction tRNA(Leu) + L-leucine + ATP = L-leucyl-tRNA(Leu) + AMP + diphosphate. This Shewanella sp. (strain MR-4) protein is Leucine--tRNA ligase.